The chain runs to 96 residues: Small ubiquitin-related modifier 2 (96 aa).

K11 is covalently cross-linked (Glycyl lysine isopeptide (Lys-Gly) (interchain with G-Cter in SUMO)). The Ubiquitin-like domain maps to 16 to 96 (DHINLKVAGQ…FQQQTGGHRI (81 aa)). A Glycyl lysine isopeptide (Gly-Lys) (interchain with K-? in acceptor proteins) cross-link involves residue G93. A propeptide spanning residues 94-96 (HRI) is cleaved from the precursor.

It belongs to the ubiquitin family. SUMO subfamily. In terms of assembly, interacts with sae2 and ube2i. Covalently attached to a number of proteins. Polymeric chains can be formed through Lys-11 cross-linking. In terms of processing, cleavage of precursor form by a sentrin-specific protease is necessary for function.

The protein localises to the nucleus. Its function is as follows. Ubiquitin-like protein that can be covalently attached to proteins as a monomer or as a lysine-linked polymer. Covalent attachment via an isopeptide bond to its substrates requires prior activation by the E1 complex sae1-sae2 and linkage to the E2 enzyme ube2i, and can be promoted by an E3 ligase such as pias1-4. This post-translational modification on lysine residues of proteins plays a crucial role in a number of cellular processes such as nuclear transport, DNA replication and repair, mitosis and signal transduction. Polymeric sumo2 chains are also susceptible to polyubiquitination which functions as a signal for proteasomal degradation of modified proteins. The sequence is that of Small ubiquitin-related modifier 2 from Danio rerio (Zebrafish).